A 170-amino-acid chain; its full sequence is Small ribosomal subunit protein bS16 (170 aa).

The segment at 114 to 170 is disordered; the sequence is EGGPTTEAAKPKKKAATSGAKKAAKAAEPEAAAPEAAEPEAAAPAEGGEQAESSTES. Low complexity predominate over residues 142–170; it reads PEAAAPEAAEPEAAAPAEGGEQAESSTES.

Belongs to the bacterial ribosomal protein bS16 family.

This Mycobacterium avium (strain 104) protein is Small ribosomal subunit protein bS16.